The chain runs to 283 residues: Elongation factor Ts (283 aa).

The interval 80 to 83 (TDFV) is involved in Mg(2+) ion dislocation from EF-Tu.

Belongs to the EF-Ts family.

It localises to the cytoplasm. Associates with the EF-Tu.GDP complex and induces the exchange of GDP to GTP. It remains bound to the aminoacyl-tRNA.EF-Tu.GTP complex up to the GTP hydrolysis stage on the ribosome. This chain is Elongation factor Ts, found in Serratia proteamaculans (strain 568).